The sequence spans 1047 residues: FACT complex subunit SPT16 (1047 aa).

At Ala2 the chain carries N-acetylalanine. At Lys139 the chain carries N6-acetyllysine. Ser188 bears the Phosphoserine mark. 2 positions are modified to N6-acetyllysine: Lys196 and Lys223. A Phosphoserine modification is found at Ser455. Positions 465 to 507 (RNEMTAEEKRRAHQKELAAQLNEEAKRRLTEQKGEQQIQKARK) form a coiled coil. The tract at residues 491 to 518 (RRLTEQKGEQQIQKARKSNVSYKNPSLM) is disordered. Lys497 is covalently cross-linked (Glycyl lysine isopeptide (Lys-Gly) (interchain with G-Cter in SUMO2)). Residues 499–514 (EQQIQKARKSNVSYKN) show a composition bias toward polar residues. Ser508 carries the phosphoserine modification. Lys513 carries the N6-acetyllysine; alternate modification. Lys513 participates in a covalent cross-link: Glycyl lysine isopeptide (Lys-Gly) (interchain with G-Cter in SUMO2); alternate. A Glycyl lysine isopeptide (Lys-Gly) (interchain with G-Cter in SUMO2) cross-link involves residue Lys647. Phosphoserine is present on residues Ser650 and Ser658. Lys732 and Lys786 each carry N6-acetyllysine. Thr903 bears the Phosphothreonine mark. The residue at position 904 (Lys904) is an N6-acetyllysine. Positions 918 to 1047 (EQGGWSFLEP…SSAPPKKKRK (130 aa)) are disordered. A compositionally biased stretch (acidic residues) spans 927–973 (PEGEGSDAEDGDSESEIEDETFNPSEDDYEEEEEDSDEDYSSEAEES). Ser979, Ser982, Ser986, and Ser1015 each carry phosphoserine. Residues 985–1005 (ESGKDWDELEEEARKADRESR) show a composition bias toward basic and acidic residues. Residues 1024–1039 (VHSSGRGSNRGSRHSS) are compositionally biased toward low complexity.

The protein belongs to the peptidase M24 family. SPT16 subfamily. Interacts with MYOG (via C-terminal region). Component of the FACT complex, a stable heterodimer of SSRP1 and SUPT16H. Also a component of a CK2-SPT16-SSRP1 complex which forms following UV irradiation, composed of SSRP1, SUPT16H, CSNK2A1, CSNK2A2 and CSNK2B. Interacts with NEK9. Binds to histone H2A-H2B. Identified in a centromere complex containing histones H2A, H2B and H4, and at least CENPA, CENPB, CENPC, CENPT, CENPN, HJURP, SUPT16H, SSRP1 and RSF1. Interacts with GTF2E2. ADP-ribosylated. ADP-ribosylation by PARP1 is induced by genotoxic stress and correlates with dissociation of FACT from chromatin. As to expression, widely expressed. Expressed in brain, liver, heart, kidneys, lungs, spleen, thymus, ovary, and testes, with highest levels of expression observed in thymus.

It localises to the nucleus. Its subcellular location is the chromosome. Its function is as follows. Component of the FACT complex, a general chromatin factor that acts to reorganize nucleosomes. The FACT complex is involved in multiple processes that require DNA as a template such as mRNA elongation, DNA replication and DNA repair. During transcription elongation the FACT complex acts as a histone chaperone that both destabilizes and restores nucleosomal structure. It facilitates the passage of RNA polymerase II and transcription by promoting the dissociation of one histone H2A-H2B dimer from the nucleosome, then subsequently promotes the reestablishment of the nucleosome following the passage of RNA polymerase II. The FACT complex is probably also involved in phosphorylation of 'Ser-392' of p53/TP53 via its association with CK2 (casein kinase II). This is FACT complex subunit SPT16 (Supt16h) from Mus musculus (Mouse).